The following is a 736-amino-acid chain: Gingipain R2 (736 aa).

Positions 1–24 are cleaved as a signal peptide; the sequence is MKKNFSRIVSIVAFSSLLGGMAFA. The propeptide occupies 25–229; it reads QPAERGRNPQ…SVFMNYEATR (205 aa). Positions 307, 329, 332, 334, 336, 390, and 395 each coordinate Ca(2+). Histidine 440 serves as the catalytic Proton donor. Catalysis depends on cysteine 473, which acts as the Nucleophile. Ca(2+) contacts are provided by phenylalanine 478, glutamate 487, aspartate 521, glutamate 522, glutamate 525, histidine 531, aspartate 613, and glutamate 639.

This sequence belongs to the peptidase C25 family.

The protein localises to the secreted. The enzyme catalyses Hydrolysis of proteins and small molecule substrates, with a preference for Arg in P1.. Thiol protease. Acts synergistically with RgpA to catalyze the maturation of fimbrial subunits, such as FimA. Its proteolytic activity is a major factor in both periodontal tissue destruction and in evasion of host defense mechanisms. In Porphyromonas gingivalis (strain ATCC 33277 / DSM 20709 / CIP 103683 / JCM 12257 / NCTC 11834 / 2561), this protein is Gingipain R2.